Reading from the N-terminus, the 347-residue chain is UDP-galactose/UDP-glucose transporter 5 (347 aa).

8 helical membrane-spanning segments follow: residues 17–37 (LWKA…YGLL), 57–77 (LFLV…ALLA), 116–136 (VQTL…TLIM), 143–163 (FDYL…LFPA), 177–197 (TVWG…TSTF), 218–238 (ICSS…LPAV), 247–267 (CLFD…FISY), and 293–313 (CIWF…IVFG). Positions 325 to 347 (SEKPPAAQELPRDEEAQPLKGNP) are disordered.

It belongs to the nucleotide-sugar transporter family. UDP-galactose:UMP antiporter (TC 2.A.7.11) subfamily.

Its subcellular location is the membrane. Its function is as follows. Sugar transporter involved in the transport of nucleotide-sugars from cytoplasm into the Golgi and/or the endoplasmic reticulum. This is UDP-galactose/UDP-glucose transporter 5 from Arabidopsis thaliana (Mouse-ear cress).